The chain runs to 265 residues: HUWE1-associated protein modifying stress responses (265 aa).

4 disordered regions span residues 1 to 22, 145 to 170, 195 to 218, and 240 to 265; these read MEDK…HWFS, RNSR…GSSV, VRSS…RRNG, and GTRK…NRMI. 2 stretches are compositionally biased toward polar residues: residues 156 to 170 and 195 to 212; these read VSPN…GSSV and VRSS…SSNT.

The protein belongs to the HAPSTR1 family. In terms of assembly, oligomer.

Its subcellular location is the nucleus. The protein resides in the cytoplasm. Functionally, acts as a central player within a network of stress response pathways promoting cellular adaptability. Functions as a negative regulator of TP53/P53 in the cellular response to telomere erosion and probably also DNA damage. The polypeptide is HUWE1-associated protein modifying stress responses (Xenopus tropicalis (Western clawed frog)).